We begin with the raw amino-acid sequence, 287 residues long: MKIRVPATSANLGPGFDSCGIALSAYLTINVLGESEFWEIQHTLGEEISTNEENLLIQTALKIAPELTPKVIRMVSDIPLARGLGSSSSVIVAGIELANRLAHLNLSPKEKVRLATEMEGHPDNVAPAILGDFVVASHVENQVYHVKHHFPMCDVIAFIPEEPLFTEKSRAVLPEKLAYKEAVAASSIANVMIAAILNGDLPLAGKMMEQDKWHETYRRSLVPHLKEIRRLTQQKGAYGSFLSGAGPTVLILSPEERTNEIVQSLEKLSTKASIQIFNIDQEGVQVF.

Proline 79–serine 89 provides a ligand contact to ATP.

This sequence belongs to the GHMP kinase family. Homoserine kinase subfamily.

It localises to the cytoplasm. It carries out the reaction L-homoserine + ATP = O-phospho-L-homoserine + ADP + H(+). Its pathway is amino-acid biosynthesis; L-threonine biosynthesis; L-threonine from L-aspartate: step 4/5. Functionally, catalyzes the ATP-dependent phosphorylation of L-homoserine to L-homoserine phosphate. This Enterococcus faecalis (strain ATCC 700802 / V583) protein is Homoserine kinase.